The chain runs to 259 residues: ATP synthase subunit a 1 (259 aa).

The next 5 membrane-spanning stretches (helical) occupy residues 30–50 (TLHV…LFFF), 90–110 (LIAP…AMDL), 135–155 (DLNA…FYSL), 209–229 (LIFI…SFPW), and 230–250 (AVFH…LTIV).

It belongs to the ATPase A chain family. As to quaternary structure, F-type ATPases have 2 components, CF(1) - the catalytic core - and CF(0) - the membrane proton channel. CF(1) has five subunits: alpha(3), beta(3), gamma(1), delta(1), epsilon(1). CF(0) has three main subunits: a(1), b(2) and c(9-12). The alpha and beta chains form an alternating ring which encloses part of the gamma chain. CF(1) is attached to CF(0) by a central stalk formed by the gamma and epsilon chains, while a peripheral stalk is formed by the delta and b chains.

Its subcellular location is the cell inner membrane. In terms of biological role, key component of the proton channel; it plays a direct role in the translocation of protons across the membrane. The chain is ATP synthase subunit a 1 from Methylococcus capsulatus (strain ATCC 33009 / NCIMB 11132 / Bath).